The following is a 328-amino-acid chain: Mitochondrial GTPase 1 (328 aa).

Residues 10 to 199 (KTTLKRLRDS…MVDTPGIMLP (190 aa)) form the CP-type G domain. Residues 57-60 (NKCD), 143-148 (NVGKSS), and G195 contribute to the GTP site.

It belongs to the TRAFAC class YlqF/YawG GTPase family. MTG1 subfamily.

The protein resides in the mitochondrion inner membrane. Functionally, mitochondrial GTPase involved in assembly of the large ribosomal subunit. Plays a role in expression of the mitochondrial translational machinery. In Schizosaccharomyces japonicus (strain yFS275 / FY16936) (Fission yeast), this protein is Mitochondrial GTPase 1.